A 580-amino-acid polypeptide reads, in one-letter code: Acyl-coenzyme A synthetase ACSM3, mitochondrial (580 aa).

The transit peptide at 1–21 (MAMLLRARCFHRLAIPDPRRI) directs the protein to the mitochondrion. Residues Lys-67 and Lys-100 each carry the N6-succinyllysine modification. Position 151 is an N6-acetyllysine (Lys-151). ATP-binding positions include 229 to 237 (TSGTTGPPK), 368 to 373 (EGYGQT), Asp-455, Arg-470, and Lys-566.

Belongs to the ATP-dependent AMP-binding enzyme family. Requires Mg(2+) as cofactor. Mn(2+) is required as a cofactor.

It is found in the mitochondrion. The protein resides in the mitochondrion matrix. The catalysed reaction is a medium-chain fatty acid + ATP + CoA = a medium-chain fatty acyl-CoA + AMP + diphosphate. It catalyses the reaction propanoate + ATP + CoA = propanoyl-CoA + AMP + diphosphate. The enzyme catalyses butanoate + ATP + CoA = butanoyl-CoA + AMP + diphosphate. It carries out the reaction 2-methylpropanoate + ATP + CoA = 2-methylpropanoyl-CoA + AMP + diphosphate. The catalysed reaction is 2-methylbutanoate + ATP + CoA = 2-methylbutanoyl-CoA + AMP + diphosphate. It catalyses the reaction octanoate + ATP + CoA = octanoyl-CoA + AMP + diphosphate. In terms of biological role, catalyzes the activation of fatty acids by CoA to produce an acyl-CoA, the first step in fatty acid metabolism. Capable of activating medium-chain fatty acids with a preference for isobutyrate among fatty acids with 2-6 carbon atoms. The sequence is that of Acyl-coenzyme A synthetase ACSM3, mitochondrial (Acsm3) from Rattus norvegicus (Rat).